The following is a 361-amino-acid chain: S-adenosylmethionine decarboxylase proenzyme (361 aa).

Residues E11 and E14 contribute to the active site. The active-site Schiff-base intermediate with substrate; via pyruvic acid is the S71. Pyruvic acid (Ser); by autocatalysis is present on S71. Catalysis depends on C85, which acts as the Proton donor; for catalytic activity. Residues S234 and H247 each act as proton acceptor; for processing activity in the active site.

This sequence belongs to the eukaryotic AdoMetDC family. Requires pyruvate as cofactor. In terms of processing, is synthesized initially as an inactive proenzyme. Formation of the active enzyme involves a self-maturation process in which the active site pyruvoyl group is generated from an internal serine residue via an autocatalytic post-translational modification. Two non-identical subunits are generated from the proenzyme in this reaction, and the pyruvate is formed at the N-terminus of the alpha chain, which is derived from the carboxyl end of the proenzyme. The post-translation cleavage follows an unusual pathway, termed non-hydrolytic serinolysis, in which the side chain hydroxyl group of the serine supplies its oxygen atom to form the C-terminus of the beta chain, while the remainder of the serine residue undergoes an oxidative deamination to produce ammonia and the pyruvoyl group blocking the N-terminus of the alpha chain.

It carries out the reaction S-adenosyl-L-methionine + H(+) = S-adenosyl 3-(methylsulfanyl)propylamine + CO2. It functions in the pathway amine and polyamine biosynthesis; S-adenosylmethioninamine biosynthesis; S-adenosylmethioninamine from S-adenosyl-L-methionine: step 1/1. The polypeptide is S-adenosylmethionine decarboxylase proenzyme (SAMDC) (Daucus carota (Wild carrot)).